A 926-amino-acid polypeptide reads, in one-letter code: Serine/threonine-protein kinase/endoribonuclease IRE2 (926 aa).

The signal sequence occupies residues 1–34 (MASAVRGSRPWPRLGLQLQFAALLLGTLSPQVHT). Topologically, residues 35–430 (LRPENLLLVS…TPDSYLGLGP (396 aa)) are lumenal. A helical membrane pass occupies residues 431–451 (QDLLAASLTAVLLGGWILFVM). Topologically, residues 452–926 (RQQQPQVVEK…RRPCPGATGR (475 aa)) are cytoplasmic. The span at 478 to 501 (DAQSLHSGASRRSQKRLQSPSKQA) shows a compositional bias: polar residues. Residues 478–509 (DAQSLHSGASRRSQKRLQSPSKQAQPLDDPEA) form a disordered region. Residues 520 to 781 (FNPKDVLGRG…APQVLAHPFF (262 aa)) form the Protein kinase domain. ATP-binding positions include 526–534 (LGRGAGGTF) and Lys-548. Asp-637 acts as the Proton acceptor in catalysis. Residues 784–912 (RAKQLQFFQD…ESLFLPYYPP (129 aa)) enclose the KEN domain.

The protein belongs to the protein kinase superfamily. Ser/Thr protein kinase family. The cofactor is Mg(2+). In terms of processing, autophosphorylated.

The protein localises to the endoplasmic reticulum membrane. It catalyses the reaction L-seryl-[protein] + ATP = O-phospho-L-seryl-[protein] + ADP + H(+). The enzyme catalyses L-threonyl-[protein] + ATP = O-phospho-L-threonyl-[protein] + ADP + H(+). With respect to regulation, the kinase domain is activated by trans-autophosphorylation. Kinase activity is required for activation of the endoribonuclease domain. Its function is as follows. Induces translational repression through 28S ribosomal RNA cleavage in response to ER stress. Pro-apoptotic. Appears to play no role in the unfolded-protein response, unlike closely related proteins. The protein is Serine/threonine-protein kinase/endoribonuclease IRE2 of Homo sapiens (Human).